The sequence spans 269 residues: Imidazoleglycerol-phosphate dehydratase 2, chloroplastic (269 aa).

The N-terminal 51 residues, 1–51 (MTTAPFLFPSLSRLHSARASSFPKPPVGSGAGVAFPARPYGSSLRLRSSVM), are a transit peptide targeting the chloroplast. Substrate contacts are provided by residues E83, 109-117 (HMLDQLASH), 135-139 (HHSNE), R161, and R183. Mn(2+) is bound by residues H109, H135, H136, and E139. Residues H207, H231, H232, and E235 each contribute to the Mn(2+) site. Substrate is bound by residues 231 to 239 (HHIIEATFK) and 261 to 263 (SSK).

It belongs to the imidazoleglycerol-phosphate dehydratase family. The cofactor is Mn(2+).

Its subcellular location is the plastid. The protein localises to the chloroplast. It carries out the reaction D-erythro-1-(imidazol-4-yl)glycerol 3-phosphate = 3-(imidazol-4-yl)-2-oxopropyl phosphate + H2O. The protein operates within amino-acid biosynthesis; L-histidine biosynthesis; L-histidine from 5-phospho-alpha-D-ribose 1-diphosphate: step 6/9. The polypeptide is Imidazoleglycerol-phosphate dehydratase 2, chloroplastic (Triticum aestivum (Wheat)).